Here is a 65-residue protein sequence, read N- to C-terminus: Cell death protein rpr (65 aa).

As to quaternary structure, interacts with Diap2 (via BIR2 domain).

Its function is as follows. Activator of apoptosis, as well as grim and hid, that acts on the effector Dredd. This Drosophila melanogaster (Fruit fly) protein is Cell death protein rpr (rpr).